The following is a 166-amino-acid chain: EEF1A lysine methyltransferase 1 (166 aa).

The protein belongs to the class I-like SAM-binding methyltransferase superfamily. EFM5 family.

It is found in the cytoplasm. The enzyme catalyses L-lysyl-[protein] + 3 S-adenosyl-L-methionine = N(6),N(6),N(6)-trimethyl-L-lysyl-[protein] + 3 S-adenosyl-L-homocysteine + 3 H(+). In terms of biological role, protein-lysine methyltransferase that selectively catalyzes the trimethylation of EEF1A at 'Lys-79'. The chain is EEF1A lysine methyltransferase 1 from Danio rerio (Zebrafish).